An 82-amino-acid polypeptide reads, in one-letter code: RNA-binding protein Hfq (82 aa).

One can recognise a Sm domain in the interval 11 to 71 (DTFLNHVRKT…ISTIMPGAPI (61 aa)).

Belongs to the Hfq family. As to quaternary structure, homohexamer.

RNA chaperone that binds small regulatory RNA (sRNAs) and mRNAs to facilitate mRNA translational regulation in response to envelope stress, environmental stress and changes in metabolite concentrations. Also binds with high specificity to tRNAs. This Rhodopseudomonas palustris (strain HaA2) protein is RNA-binding protein Hfq.